We begin with the raw amino-acid sequence, 143 residues long: S-protein homolog 11 (143 aa).

Residues methionine 1–alanine 20 form the signal peptide.

This sequence belongs to the plant self-incompatibility (S1) protein family.

The protein localises to the secreted. This Arabidopsis thaliana (Mouse-ear cress) protein is S-protein homolog 11.